Consider the following 378-residue polypeptide: Glutamate 5-kinase (378 aa).

Position 19 (lysine 19) interacts with ATP. Positions 59, 146, and 158 each coordinate substrate. Residue 178 to 179 coordinates ATP; the sequence is TD. Residues 285 to 363 enclose the PUA domain; that stretch reads RGSVAVDAGA…SEFERLLGYT (79 aa).

Belongs to the glutamate 5-kinase family.

It is found in the cytoplasm. It catalyses the reaction L-glutamate + ATP = L-glutamyl 5-phosphate + ADP. It participates in amino-acid biosynthesis; L-proline biosynthesis; L-glutamate 5-semialdehyde from L-glutamate: step 1/2. In terms of biological role, catalyzes the transfer of a phosphate group to glutamate to form L-glutamate 5-phosphate. In Polaromonas sp. (strain JS666 / ATCC BAA-500), this protein is Glutamate 5-kinase.